The following is a 553-amino-acid chain: Putative transport protein YidE (553 aa).

5 helical membrane passes run 4-24 (IALT…IGNV), 28-48 (GIGL…HFVS), 65-85 (FGLI…FFAS), 95-115 (LFAV…HKLF), and 158-178 (MSYA…MWML). RCK C-terminal domains follow at residues 191-276 (QQHE…VIGQ) and 279-361 (DTSL…VLGN). 6 helical membrane-spanning segments follow: residues 371–391 (MLPV…PVFV), 393–413 (GFPA…ALIL), 431–448 (NLAL…VVGL), 464–484 (LSWI…VGIL), 493–513 (YLTM…LAFA), and 533–553 (LVMF…WSIG).

Belongs to the AAE transporter (TC 2.A.81) family. YidE subfamily.

It localises to the cell membrane. The polypeptide is Putative transport protein YidE (Shigella sonnei (strain Ss046)).